A 97-amino-acid polypeptide reads, in one-letter code: Co-chaperonin GroES (97 aa).

The protein belongs to the GroES chaperonin family. As to quaternary structure, heptamer of 7 subunits arranged in a ring. Interacts with the chaperonin GroEL.

Its subcellular location is the cytoplasm. Functionally, together with the chaperonin GroEL, plays an essential role in assisting protein folding. The GroEL-GroES system forms a nano-cage that allows encapsulation of the non-native substrate proteins and provides a physical environment optimized to promote and accelerate protein folding. GroES binds to the apical surface of the GroEL ring, thereby capping the opening of the GroEL channel. This is Co-chaperonin GroES from Enterobacter sp. (strain 638).